A 98-amino-acid chain; its full sequence is UPF0473 protein LAR_0522 (98 aa).

It belongs to the UPF0473 family.

In Limosilactobacillus reuteri subsp. reuteri (strain JCM 1112) (Lactobacillus reuteri), this protein is UPF0473 protein LAR_0522.